We begin with the raw amino-acid sequence, 589 residues long: Complement component C8 beta chain (589 aa).

An N-terminal signal peptide occupies residues 1–31 (MKTGAQVWRALAKSCLLCAALGCLHLPGARG). A propeptide spanning residues 32 to 53 (EKPDFFETNAVNGSLVRSRPVR) is cleaved from the precursor. The N-linked (GlcNAc...) asparagine glycan is linked to N43. One can recognise a TSP type-1 1 domain in the interval 63 to 116 (DCQLSTWSSWTACDPCQKKRYRHTYLLRPSQFYGELCDFSDKEVEDCVTNRACR). Intrachain disulfides connect C64-C99, C75-C109, C78-C115, C121-C132, C126-C145, C139-C154, and C161-C199. W69 and W72 each carry a C-linked (Man) tryptophan glycan. Residues 120–155 (RCEGFVCAQTGRCVNRRLLCNGDNDCGDQSDEANCR) enclose the LDL-receptor class A domain. Ca(2+) is bound by residues L137, N140, D142, D144, D150, and E151. Residues 157-503 (IYKKCSQDME…EFQMEVSSCR (347 aa)) enclose the MACPF domain. N242 carries N-linked (GlcNAc...) asparagine glycosylation. The next 4 beta stranded transmembrane spans lie at 251-258 (SSFKFGFK), 261-268 (GLVEFGVR), 378-385 (AGGGFQIG), and 391-398 (VYLKLGVS). C377 and C402 form a disulfide bridge. Residue T417 is modified to Phosphothreonine. 4 disulfides stabilise this stretch: C502–C549, C504–C520, C507–C522, and C524–C533. One can recognise an EGF-like domain in the interval 504 to 534 (CAPCRNNGVPILKESRCECICPAGFQGVACE). The region spanning 544-587 (DGKWSCWSDWSPCSGGRKTRQRQCNNPAPQRGGSPCSGPASETL) is the TSP type-1 2 domain. 2 C-linked (Man) tryptophan glycosylation sites follow: W550 and W553. C556 and C589 form a disulfide bridge. Residues 556 to 589 (CSGGRKTRQRQCNNPAPQRGGSPCSGPASETLDC) form a disordered region.

This sequence belongs to the complement C6/C7/C8/C9 family. In terms of assembly, heterotrimer of 3 chains: alpha (C8A), beta (C8B) and gamma (C8G); the alpha and gamma chains are disulfide bonded. Component of the membrane attack complex (MAC), composed of complement C5b, C6, C7, C8A, C8B, C8G and multiple copies of the pore-forming subunit C9. In terms of processing, N-glycosylated; contains one or two bound glycans. Not O-glycosylated.

Its subcellular location is the secreted. It localises to the target cell membrane. With respect to regulation, membrane attack complex (MAC) assembly is inhibited by CD59, thereby protecting self-cells from damage during complement activation. CD59 acts by binding to the beta-haipins of C8 (C8A and C8B), forming an intermolecular beta-sheet that prevents incorporation of the multiple copies of C9 required for complete formation of the osmolytic pore. MAC assembly is also inhibited by clusterin (CLU) chaperones that inhibit polymerization of C9. In terms of biological role, component of the membrane attack complex (MAC), a multiprotein complex activated by the complement cascade, which inserts into a target cell membrane and forms a pore, leading to target cell membrane rupture and cell lysis. The MAC is initiated by proteolytic cleavage of C5 into complement C5b in response to the classical, alternative, lectin and GZMK complement pathways. The complement pathways consist in a cascade of proteins that leads to phagocytosis and breakdown of pathogens and signaling that strengthens the adaptive immune system. C8B, together with C8A and C8G, inserts into the target membrane, but does not form pores by itself. During MAC assembly, associates with C5b, C6 and C7 to form the C5b8 intermediate complex that inserts into the target membrane and traverses the bilayer increasing membrane rigidity. This chain is Complement component C8 beta chain (C8b), found in Rattus norvegicus (Rat).